A 257-amino-acid chain; its full sequence is Zinc import ATP-binding protein ZnuC (257 aa).

In terms of domain architecture, ABC transporter spans 6-221 (IRLDQVGVTF…PAFVELFGKT (216 aa)). Position 38-45 (38-45 (GPNGAGKT)) interacts with ATP.

Belongs to the ABC transporter superfamily. Zinc importer (TC 3.A.1.15.5) family. In terms of assembly, the complex is composed of two ATP-binding proteins (ZnuC), two transmembrane proteins (ZnuB) and a solute-binding protein (ZnuA).

It localises to the cell inner membrane. It catalyses the reaction Zn(2+)(out) + ATP(in) + H2O(in) = Zn(2+)(in) + ADP(in) + phosphate(in) + H(+)(in). Functionally, part of the ABC transporter complex ZnuABC involved in zinc import. Responsible for energy coupling to the transport system. The chain is Zinc import ATP-binding protein ZnuC from Pseudomonas putida (strain ATCC 47054 / DSM 6125 / CFBP 8728 / NCIMB 11950 / KT2440).